The primary structure comprises 887 residues: Alanine--tRNA ligase (887 aa).

Residues 425–441 (MQEQKSRARSDRREKQQ) show a composition bias toward basic and acidic residues. The tract at residues 425 to 448 (MQEQKSRARSDRREKQQTGDGAGS) is disordered. Residues His569, His573, Cys672, and His676 each coordinate Zn(2+).

The protein belongs to the class-II aminoacyl-tRNA synthetase family. Zn(2+) serves as cofactor.

It is found in the cytoplasm. It catalyses the reaction tRNA(Ala) + L-alanine + ATP = L-alanyl-tRNA(Ala) + AMP + diphosphate. Functionally, catalyzes the attachment of alanine to tRNA(Ala) in a two-step reaction: alanine is first activated by ATP to form Ala-AMP and then transferred to the acceptor end of tRNA(Ala). Also edits incorrectly charged Ser-tRNA(Ala) and Gly-tRNA(Ala) via its editing domain. This chain is Alanine--tRNA ligase, found in Chlorobium luteolum (strain DSM 273 / BCRC 81028 / 2530) (Pelodictyon luteolum).